The chain runs to 542 residues: Thermosome subunit alpha (542 aa).

The protein belongs to the TCP-1 chaperonin family. As to quaternary structure, forms a Heterooligomeric complex of two stacked eight-membered rings.

Functionally, molecular chaperone; binds unfolded polypeptides in vitro, and has a weak ATPase activity. The chain is Thermosome subunit alpha (thsA) from Methanothermobacter thermautotrophicus (strain ATCC 29096 / DSM 1053 / JCM 10044 / NBRC 100330 / Delta H) (Methanobacterium thermoautotrophicum).